We begin with the raw amino-acid sequence, 205 residues long: MRERGLLIVFSGPSGVGKGTVRAKIFESENNFEYSVSMTTRKQRPGEVDGKDYYFRTRDEFEEMIRNGQMLEYAEYVGNYYGTPLTYVNQTLDEGKDVFLEIEVQGALQVKEKVPDGVFVFLTPPDLEELRGRLVGRGTDSAEVIASRLEKAKEEIRLMSEYDYAVVNDKVELAAERVKKIIEAEHYRVDRVIERYVHMIDDVKV.

The Guanylate kinase-like domain maps to 5–183 (GLLIVFSGPS…AAERVKKIIE (179 aa)). 12 to 19 (GPSGVGKG) serves as a coordination point for ATP.

This sequence belongs to the guanylate kinase family.

The protein resides in the cytoplasm. The catalysed reaction is GMP + ATP = GDP + ADP. Functionally, essential for recycling GMP and indirectly, cGMP. The protein is Guanylate kinase (gmk) of Lactococcus lactis subsp. lactis (strain IL1403) (Streptococcus lactis).